The chain runs to 560 residues: Eukaryotic translation initiation factor 3 subunit D-1 (560 aa).

Positions 98–166 (VQKPPHQRGR…RGPPPKMRES (69 aa)) are disordered. Basic residues predominate over residues 100-121 (KPPHQRGRFRNMRNSRSGRGRN). T128 is subject to Phosphothreonine. A compositionally biased stretch (basic residues) spans 147–156 (GRGMGKKFGH). Positions 291-305 (EFDLLTVNESSVEPP) are RNA gate.

This sequence belongs to the eIF-3 subunit D family. Component of the eukaryotic translation initiation factor 3 (eIF-3) complex. The eIF-3 complex interacts with pix.

Its subcellular location is the cytoplasm. MRNA cap-binding component of the eukaryotic translation initiation factor 3 (eIF-3) complex, which is involved in protein synthesis of a specialized repertoire of mRNAs and, together with other initiation factors, stimulates binding of mRNA and methionyl-tRNAi to the 40S ribosome. The eIF-3 complex specifically targets and initiates translation of a subset of mRNAs involved in cell proliferation. In the eIF-3 complex, eif3d specifically recognizes and binds the 7-methylguanosine cap of a subset of mRNAs. This chain is Eukaryotic translation initiation factor 3 subunit D-1, found in Drosophila simulans (Fruit fly).